Reading from the N-terminus, the 79-residue chain is Protein VdcD (79 aa).

Involved in the non-oxidative decarboxylation and detoxification of phenolic derivatives under both aerobic and anaerobic conditions, however the precise biochemical function of VdcD in metabolism of phenolic acid is unknown. The sequence is that of Protein VdcD from Streptomyces sp. (strain D7).